A 425-amino-acid chain; its full sequence is tRNA(Ile)-lysidine synthase (425 aa).

Position 37 to 42 (37 to 42) interacts with ATP; sequence SGGKDS.

This sequence belongs to the tRNA(Ile)-lysidine synthase family.

It localises to the cytoplasm. The enzyme catalyses cytidine(34) in tRNA(Ile2) + L-lysine + ATP = lysidine(34) in tRNA(Ile2) + AMP + diphosphate + H(+). Functionally, ligates lysine onto the cytidine present at position 34 of the AUA codon-specific tRNA(Ile) that contains the anticodon CAU, in an ATP-dependent manner. Cytidine is converted to lysidine, thus changing the amino acid specificity of the tRNA from methionine to isoleucine. The protein is tRNA(Ile)-lysidine synthase of Leptospira borgpetersenii serovar Hardjo-bovis (strain JB197).